The sequence spans 124 residues: Large ribosomal subunit protein eL31 (124 aa).

It belongs to the eukaryotic ribosomal protein eL31 family.

This is Large ribosomal subunit protein eL31 (RpL31) from Aedes aegypti (Yellowfever mosquito).